An 808-amino-acid polypeptide reads, in one-letter code: Probable ATP-dependent helicase MJ1401 (808 aa).

The short motif at 189 to 217 (YKIDELDIPEELKEIIKSRGIEELLPVQT) is the Q motif element. The Helicase ATP-binding domain maps to 221–391 (KAGLLNGDDL…QLNAKLVLYN (171 aa)). Residue 234–241 (SATSSGKT) coordinates ATP. The DEIH box motif lies at 336 to 339 (DEIH). One can recognise a Helicase C-terminal domain in the interval 396-585 (PLERHIIFCK…EDEEEEQILA (190 aa)).

The protein belongs to the DEAD box helicase family.

The sequence is that of Probable ATP-dependent helicase MJ1401 from Methanocaldococcus jannaschii (strain ATCC 43067 / DSM 2661 / JAL-1 / JCM 10045 / NBRC 100440) (Methanococcus jannaschii).